The primary structure comprises 113 residues: DNA-directed RNA polymerase subunit Rpo4 (113 aa).

Belongs to the eukaryotic RPB4 RNA polymerase subunit family. As to quaternary structure, part of the 13-subunit RNA polymerase complex. Forms a stalk with Rpo7 that extends from the main structure.

It localises to the cytoplasm. The catalysed reaction is RNA(n) + a ribonucleoside 5'-triphosphate = RNA(n+1) + diphosphate. DNA-dependent RNA polymerase (RNAP) catalyzes the transcription of DNA into RNA using the four ribonucleoside triphosphates as substrates. This subunit is less well bound than the others. This is DNA-directed RNA polymerase subunit Rpo4 from Saccharolobus solfataricus (strain ATCC 35092 / DSM 1617 / JCM 11322 / P2) (Sulfolobus solfataricus).